Here is a 129-residue protein sequence, read N- to C-terminus: Virion-associated protein (129 aa).

Coiled coils occupy residues 1-31 (MANL…ILEM) and 38-59 (IKES…LIND). Positions 122–129 (PAGWPNQF) are capsid binding.

This sequence belongs to the caulimovirus ORF III family. In terms of assembly, homotetramer, through coiled-coil domain. Homotrimer when interacts with icosehadral capsid. Interacts with capsid protein, and with Movement protein.

The protein localises to the virion. The protein resides in the host cell junction. It is found in the host plasmodesma. Plays a role in virus cell-to-cell and plant-to-plant transmission. Interacts with virion icosahedral capsid and movement protein, thereby facilitating virion cell-to-cell transmission through plasmodesmata opened by viral movement protein. Also interacts with aphid transmission factor, attaching the virion to aphid stylet when the animal feeds on an virus infected plant. Aphid saliva may later detach the virion, inducing release of infectious particles when the animal feeds on a new plant. This chain is Virion-associated protein, found in Arabidopsis thaliana (Mouse-ear cress).